A 231-amino-acid polypeptide reads, in one-letter code: Orotidine 5'-phosphate decarboxylase (231 aa).

Residues Asp-12, Lys-34, 61–70 (DLKFHDIPNT), Thr-120, Arg-181, Gln-190, Gly-210, and Arg-211 each bind substrate. The Proton donor role is filled by Lys-63.

The protein belongs to the OMP decarboxylase family. Type 1 subfamily. In terms of assembly, homodimer.

The catalysed reaction is orotidine 5'-phosphate + H(+) = UMP + CO2. Its pathway is pyrimidine metabolism; UMP biosynthesis via de novo pathway; UMP from orotate: step 2/2. Functionally, catalyzes the decarboxylation of orotidine 5'-monophosphate (OMP) to uridine 5'-monophosphate (UMP). The sequence is that of Orotidine 5'-phosphate decarboxylase from Alcanivorax borkumensis (strain ATCC 700651 / DSM 11573 / NCIMB 13689 / SK2).